The following is a 249-amino-acid chain: 5'-nucleotidase SurE (249 aa).

A divalent metal cation-binding residues include aspartate 8, aspartate 9, serine 39, and asparagine 91.

Belongs to the SurE nucleotidase family. It depends on a divalent metal cation as a cofactor.

The protein localises to the cytoplasm. It catalyses the reaction a ribonucleoside 5'-phosphate + H2O = a ribonucleoside + phosphate. Functionally, nucleotidase that shows phosphatase activity on nucleoside 5'-monophosphates. The protein is 5'-nucleotidase SurE of Pseudomonas syringae pv. syringae (strain B728a).